We begin with the raw amino-acid sequence, 184 residues long: Adenine phosphoribosyltransferase (184 aa).

The protein belongs to the purine/pyrimidine phosphoribosyltransferase family. Homodimer.

The protein localises to the cytoplasm. It carries out the reaction AMP + diphosphate = 5-phospho-alpha-D-ribose 1-diphosphate + adenine. Its pathway is purine metabolism; AMP biosynthesis via salvage pathway; AMP from adenine: step 1/1. Catalyzes a salvage reaction resulting in the formation of AMP, that is energically less costly than de novo synthesis. The chain is Adenine phosphoribosyltransferase from Myxococcus xanthus (strain DK1622).